A 510-amino-acid chain; its full sequence is ATP synthase subunit alpha (510 aa).

169 to 176 (GDRQTGKT) is a binding site for ATP.

This sequence belongs to the ATPase alpha/beta chains family. F-type ATPases have 2 components, CF(1) - the catalytic core - and CF(0) - the membrane proton channel. CF(1) has five subunits: alpha(3), beta(3), gamma(1), delta(1), epsilon(1). CF(0) has four main subunits: a(1), b(1), b'(1) and c(9-12).

It localises to the cell inner membrane. The catalysed reaction is ATP + H2O + 4 H(+)(in) = ADP + phosphate + 5 H(+)(out). Its function is as follows. Produces ATP from ADP in the presence of a proton gradient across the membrane. The alpha chain is a regulatory subunit. This chain is ATP synthase subunit alpha, found in Rhodospirillum rubrum (strain ATCC 11170 / ATH 1.1.1 / DSM 467 / LMG 4362 / NCIMB 8255 / S1).